The following is a 195-amino-acid chain: MSRTATIKRDTFETQIELTLDLDEQTPIKVDTGIGYIDHMLTLFAKHGRFGLQVDVKGDLQVDSHHTTEDIGIVLGEAFTQALGDKVGIERYGAQFVPMDETLTRAVIDLSGRSYLVLHAELTAPTLGTFETEVVEDFWQGFADQARANVHIEVLYGRNTHHKIESMFKAVGRAMRQAITINPEIKGVNSTKGRI.

It belongs to the imidazoleglycerol-phosphate dehydratase family.

It is found in the cytoplasm. It catalyses the reaction D-erythro-1-(imidazol-4-yl)glycerol 3-phosphate = 3-(imidazol-4-yl)-2-oxopropyl phosphate + H2O. Its pathway is amino-acid biosynthesis; L-histidine biosynthesis; L-histidine from 5-phospho-alpha-D-ribose 1-diphosphate: step 6/9. The sequence is that of Imidazoleglycerol-phosphate dehydratase from Leuconostoc mesenteroides subsp. mesenteroides (strain ATCC 8293 / DSM 20343 / BCRC 11652 / CCM 1803 / JCM 6124 / NCDO 523 / NBRC 100496 / NCIMB 8023 / NCTC 12954 / NRRL B-1118 / 37Y).